Reading from the N-terminus, the 176-residue chain is Cytochrome b (176 aa).

3 consecutive transmembrane segments (helical) span residues 33–53 (FGSL…FLAM), 77–98 (WILR…YLHV), and 113–133 (WNIG…GYVL). Heme b contacts are provided by His-83 and His-97.

It belongs to the cytochrome b family. As to quaternary structure, the cytochrome bc1 complex contains 11 subunits: 3 respiratory subunits (MT-CYB, CYC1 and UQCRFS1), 2 core proteins (UQCRC1 and UQCRC2) and 6 low-molecular weight proteins (UQCRH/QCR6, UQCRB/QCR7, UQCRQ/QCR8, UQCR10/QCR9, UQCR11/QCR10 and a cleavage product of UQCRFS1). This cytochrome bc1 complex then forms a dimer. It depends on heme b as a cofactor.

Its subcellular location is the mitochondrion inner membrane. Its function is as follows. Component of the ubiquinol-cytochrome c reductase complex (complex III or cytochrome b-c1 complex) that is part of the mitochondrial respiratory chain. The b-c1 complex mediates electron transfer from ubiquinol to cytochrome c. Contributes to the generation of a proton gradient across the mitochondrial membrane that is then used for ATP synthesis. This Myotis leibii (Eastern small-footed myotis) protein is Cytochrome b (MT-CYB).